The sequence spans 230 residues: Large ribosomal subunit protein uL1 (230 aa).

The protein belongs to the universal ribosomal protein uL1 family. Part of the 50S ribosomal subunit.

Its function is as follows. Binds directly to 23S rRNA. The L1 stalk is quite mobile in the ribosome, and is involved in E site tRNA release. Functionally, protein L1 is also a translational repressor protein, it controls the translation of the L11 operon by binding to its mRNA. This chain is Large ribosomal subunit protein uL1, found in Staphylococcus aureus (strain N315).